The sequence spans 311 residues: MPPWNRGQWGANFPPPAGTPPYPRSCGLSTGMKNFHLHLVSDATGETVTSVARACLVQFEGVQPIQHNWWLVRTQGQVERVIAGIEDNPGLVFFTLVDGAVRGLLEEACRHRGIPCISLLDPVMAGLSAFLGVEVTALPGRQYQLDAEYFRRIDAMQFTLSHDDGQLIELADQADIVLVGVSRSSKTPTCMYLANRGFKCANYPLVPGVPLPPELERAKKPLVVGLTKDPKSLSDIRRARLRLLNQEEEADYAQFEKVKEEVQQARRIFSRLGWPVVDVTRRSIEEASATIIQLYERHLEKRGLKAEVLPS.

180 to 187 contacts ADP; the sequence is GVSRSSKT.

The protein belongs to the pyruvate, phosphate/water dikinase regulatory protein family. PDRP subfamily.

It catalyses the reaction N(tele)-phospho-L-histidyl/L-threonyl-[pyruvate, phosphate dikinase] + ADP = N(tele)-phospho-L-histidyl/O-phospho-L-threonyl-[pyruvate, phosphate dikinase] + AMP + H(+). It carries out the reaction N(tele)-phospho-L-histidyl/O-phospho-L-threonyl-[pyruvate, phosphate dikinase] + phosphate + H(+) = N(tele)-phospho-L-histidyl/L-threonyl-[pyruvate, phosphate dikinase] + diphosphate. Its function is as follows. Bifunctional serine/threonine kinase and phosphorylase involved in the regulation of the pyruvate, phosphate dikinase (PPDK) by catalyzing its phosphorylation/dephosphorylation. The protein is Putative pyruvate, phosphate dikinase regulatory protein of Paramagnetospirillum magneticum (strain ATCC 700264 / AMB-1) (Magnetospirillum magneticum).